The chain runs to 730 residues: Elongation factor 2 (730 aa).

One can recognise a tr-type G domain in the interval 19–260 (DRIRNIGIVA…MVVKHLPNPL (242 aa)). GTP contacts are provided by residues 28-35 (AHIDHGKT), 94-98 (DTPGH), and 148-151 (NKVD). H597 carries the post-translational modification Diphthamide.

Belongs to the TRAFAC class translation factor GTPase superfamily. Classic translation factor GTPase family. EF-G/EF-2 subfamily.

It is found in the cytoplasm. In terms of biological role, catalyzes the GTP-dependent ribosomal translocation step during translation elongation. During this step, the ribosome changes from the pre-translocational (PRE) to the post-translocational (POST) state as the newly formed A-site-bound peptidyl-tRNA and P-site-bound deacylated tRNA move to the P and E sites, respectively. Catalyzes the coordinated movement of the two tRNA molecules, the mRNA and conformational changes in the ribosome. The sequence is that of Elongation factor 2 from Methanoculleus marisnigri (strain ATCC 35101 / DSM 1498 / JR1).